Here is a 169-residue protein sequence, read N- to C-terminus: S-ribosylhomocysteine lyase (169 aa).

Residues H54, H58, and C128 each coordinate Fe cation.

The protein belongs to the LuxS family. Homodimer. Requires Fe cation as cofactor.

It carries out the reaction S-(5-deoxy-D-ribos-5-yl)-L-homocysteine = (S)-4,5-dihydroxypentane-2,3-dione + L-homocysteine. Functionally, involved in the synthesis of autoinducer 2 (AI-2) which is secreted by bacteria and is used to communicate both the cell density and the metabolic potential of the environment. The regulation of gene expression in response to changes in cell density is called quorum sensing. Catalyzes the transformation of S-ribosylhomocysteine (RHC) to homocysteine (HC) and 4,5-dihydroxy-2,3-pentadione (DPD). The sequence is that of S-ribosylhomocysteine lyase from Shewanella halifaxensis (strain HAW-EB4).